A 106-amino-acid polypeptide reads, in one-letter code: Large ribosomal subunit protein eL30 (106 aa).

This sequence belongs to the eukaryotic ribosomal protein eL30 family.

The chain is Large ribosomal subunit protein eL30 from Methanococcus maripaludis (strain C7 / ATCC BAA-1331).